The sequence spans 359 residues: MIALPQDRMDQLLKRFSMIESQMANNPDSDTYVKLASEYSELQDVVGKIRELSDARMEASDLAAMRDDASTDAEMRALAVEELPEVEKRIAVLEQDVQILLLPKDAADDKNAILEIRAGTGGLEAALFAGDLFRMYERYAAEKGWRVELVSASEGDAGGYKEIIATVSGKGVFSKLKFESGVHRVQRVPETEAGGRIHTSAATVAVLPEAEDIDIEIRNEDIRIDTMRASGAGGQHVNTTDSAVRITHIPTGIMVVQAEKSQHQNRARAMQILRARLYDMERQKAESERSQARRSQVGSGDRSERIRTYNFPQGRVTDHRINLTLYKLDRVMEGDLDELVDALISDHQTALLAELGEQP.

An N5-methylglutamine modification is found at Q235. The tract at residues 283–309 (QKAESERSQARRSQVGSGDRSERIRTY) is disordered.

The protein belongs to the prokaryotic/mitochondrial release factor family. In terms of processing, methylated by PrmC. Methylation increases the termination efficiency of RF1.

It is found in the cytoplasm. Peptide chain release factor 1 directs the termination of translation in response to the peptide chain termination codons UAG and UAA. In Brucella canis (strain ATCC 23365 / NCTC 10854 / RM-666), this protein is Peptide chain release factor 1.